The primary structure comprises 157 residues: AM-toxin biosynthesis protein 15 (157 aa).

The segment at 17 to 43 (RARHWDSKQGSSNSDVASGGSEVAGNS) is disordered.

The protein operates within mycotoxin biosynthesis. Functionally, part of the gene clusters that mediate the biosynthesis of AM-toxins, host-selective toxins (HSTs) causing Alternaria blotch on apple, a worldwide distributed disease. AM-toxins are cyclic depsipeptides containing the 3 residues 2-hydroxy-isovaleric acid (2-HIV), dehydroalanine, L-alanine which are common for all 3 AM-toxins I to III. The fourth precursor is L-alpha-amino-methoxyphenyl-valeric acid (L-Amv) for AM-toxin I, L-alpha-amino-phenyl-valeric acid (L-Apv) for AM-toxin II, and L-alpha-amino-hydroxyphenyl-valeric acid (L-Ahv) for AM-toxin III. AM-toxins have two target sites for affecting susceptible apple cells; they cause invagination of the plasma membrane and electrolyte loss and chloroplast disorganization. The non-ribosomal peptide synthetase AMT1 contains 4 catalytic modules and is responsible for activation of each residue in AM-toxin. The aldo-keto reductase AMT2 catalyzes the conversion of 2-keto-isovaleric acid (2-KIV) to 2-hydroxy-isovaleric acid (2-HIV), one of the precursor residues incorporated by AMT1 during AM-toxin biosynthesis, by reduction of its ketone to an alcohol. The cytochrome P450 monooxygenase AMT3 and the thioesterase AMT4 are also important for AM-toxin production, but their exact function within the AM-toxin biosynthesis are not known yet. Up to 21 proteins (including AMT1 to AMT4) are predicted to be involved in AM-toxin biosynthesis since their expression ishighly up-regulated in AM-toxin-producing cultures. In Alternaria alternata (Alternaria rot fungus), this protein is AM-toxin biosynthesis protein 15.